Reading from the N-terminus, the 34-residue chain is Photosystem II reaction center protein T (34 aa).

Residues Ala3–Phe23 form a helical membrane-spanning segment.

The protein belongs to the PsbT family. In terms of assembly, PSII is composed of 1 copy each of membrane proteins PsbA, PsbB, PsbC, PsbD, PsbE, PsbF, PsbH, PsbI, PsbJ, PsbK, PsbL, PsbM, PsbT, PsbY, PsbZ, Psb30/Ycf12, at least 3 peripheral proteins of the oxygen-evolving complex and a large number of cofactors. It forms dimeric complexes.

The protein resides in the plastid. It is found in the chloroplast thylakoid membrane. Its function is as follows. Found at the monomer-monomer interface of the photosystem II (PS II) dimer, plays a role in assembly and dimerization of PSII. PSII is a light-driven water plastoquinone oxidoreductase, using light energy to abstract electrons from H(2)O, generating a proton gradient subsequently used for ATP formation. This is Photosystem II reaction center protein T from Solanum lycopersicum (Tomato).